The chain runs to 532 residues: Nucleobase-ascorbate transporter 6 (532 aa).

The tract at residues 1-24 (MAGGGAPAPKADEPQPHPPKDQLP) is disordered. Residues 10-20 (KADEPQPHPPK) show a composition bias toward basic and acidic residues. Transmembrane regions (helical) follow at residues 39–59 (AILL…LIPT), 75–95 (VIQT…LFGT), 97–117 (LPAV…IILS), 137–157 (TQGA…SGLW), 163–185 (FLSP…EFGF), 192–212 (IEIG…LPHV), 223–243 (FAVI…TVGG), 289–309 (FAMM…FVAV), 361–381 (VGSR…SILG), 392–414 (APII…LSFL), 426–446 (FILG…NEYT), and 463–483 (DMVN…AFFL).

This sequence belongs to the nucleobase:cation symporter-2 (NCS2) (TC 2.A.40) family. In terms of tissue distribution, expressed in the apical region of cotyledons 4 days after imbibition (DAI). Expressed in the whole vasculature at 12 DAI. Expressed in the root central cylinder and lateral root primordia. Expressed in the vasculature of sepals, filaments, carpels and developing siliques.

It localises to the membrane. The chain is Nucleobase-ascorbate transporter 6 (NAT6) from Arabidopsis thaliana (Mouse-ear cress).